The primary structure comprises 329 residues: Two pore potassium channel protein sup-9 (329 aa).

The Cytoplasmic portion of the chain corresponds to 1-8 (MKRQNIRT). A helical membrane pass occupies residues 9-29 (LSLIVCTLTYLLVGAAVFDAL). N-linked (GlcNAc...) asparagine glycosylation occurs at Asn-53. Positions 80-100 (FSGAFYFATTVITTIGYGHST) form an intramembrane region, pore-forming. The Selectivity filter signature appears at 93-98 (TIGYGH). Residues 108–128 (VFCMLYALAGIPLGLIMFQSI) form a helical membrane-spanning segment. The Cytoplasmic portion of the chain corresponds to 129 to 157 (GERMNTFAAKLLRFIRRAAGKQPIVTSSD). The chain crosses the membrane as a helical span at residues 158–178 (LIIFCTGWGGLLIFGGAFMFS). N-linked (GlcNAc...) asparagine glycosylation is present at Asn-182. The pore-forming intramembrane region spans 186 to 206 (FDAVYYCFVTLTTIGFGDYVA). Positions 198-203 (TIGFGD) match the Selectivity filter motif. A helical transmembrane segment spans residues 220–240 (VFFSLVFILFGLTVISAAMNL). Over 241-329 (LVLRFLTMNT…FSGMTTRPKY (89 aa)) the chain is Cytoplasmic. The may be important for regulation by and/or interaction with sup-10 stretch occupies residues 289–296 (SLASCSCY). The tract at residues 307–329 (HRKHTEPHGGPPTFSGMTTRPKY) is disordered.

This sequence belongs to the two pore domain potassium channel (TC 1.A.1.8) family. May form a complex with the regulatory subunits unc-93 and sup-10. In terms of tissue distribution, low levels along surface of body-wall muscle cells, in vulval and intestinal muscles and, more weakly, in anal depressor and sphincter muscles. Also expressed in a subset of head neurons.

Its subcellular location is the membrane. In terms of biological role, potassium channel involved in coordination of muscle contraction. Activity is regulated by sup-18. This is Two pore potassium channel protein sup-9 from Caenorhabditis elegans.